The sequence spans 701 residues: Elongation factor G (701 aa).

One can recognise a tr-type G domain in the interval 8 to 290 (ERYRNIGISA…AVVDYLPAPT (283 aa)). GTP-binding positions include 17–24 (AHIDAGKT), 88–92 (DTPGH), and 142–145 (NKMD).

The protein belongs to the TRAFAC class translation factor GTPase superfamily. Classic translation factor GTPase family. EF-G/EF-2 subfamily.

The protein resides in the cytoplasm. Catalyzes the GTP-dependent ribosomal translocation step during translation elongation. During this step, the ribosome changes from the pre-translocational (PRE) to the post-translocational (POST) state as the newly formed A-site-bound peptidyl-tRNA and P-site-bound deacylated tRNA move to the P and E sites, respectively. Catalyzes the coordinated movement of the two tRNA molecules, the mRNA and conformational changes in the ribosome. The sequence is that of Elongation factor G from Aeromonas salmonicida (strain A449).